A 178-amino-acid polypeptide reads, in one-letter code: Caveolin-1 (178 aa).

Serine 2 carries the post-translational modification N-acetylserine. At serine 2 the chain carries Phosphoserine. The segment at 2–94 is required for homooligomerization; sequence SGGKYVDSEG…WKASFTTFTV (93 aa). The Cytoplasmic segment spans residues 2 to 104; the sequence is SGGKYVDSEG…TKYWFYRLLS (103 aa). Lysine 5 is modified (N6-acetyllysine; alternate). Lysine 5 participates in a covalent cross-link: Glycyl lysine isopeptide (Lys-Gly) (interchain with G-Cter in ubiquitin); alternate. Tyrosine 6 carries the post-translational modification Phosphotyrosine. The residue at position 9 (serine 9) is a Phosphoserine. At tyrosine 14 the chain carries Phosphotyrosine; by ABL1. Tyrosine 25 carries the phosphotyrosine modification. Glycyl lysine isopeptide (Lys-Gly) (interchain with G-Cter in ubiquitin) cross-links involve residues lysine 26, lysine 30, lysine 39, lysine 47, and lysine 57. Residues 82 to 94 form an interaction with CAVIN3 region; it reads DGIWKASFTTFTV. Residues 105-125 constitute an intramembrane region (helical); the sequence is TLFGIPMALIWGIYFAILSFL. The Cytoplasmic segment spans residues 126-178; that stretch reads HIWAVVPCIKSFLIEIQCIGRVYSIYIHTFCDPLFEAVGKLFSNIRINMQKEI. The tract at residues 131-142 is interacts with SPRY1, SPRY2, SPRY3 and SPRY4; it reads VPCIKSFLIEIQ. 3 S-palmitoyl cysteine lipidation sites follow: cysteine 133, cysteine 143, and cysteine 156. The interval 149-160 is interacts with SPRY1, SPRY2, and SPRY4; that stretch reads SIYIHTFCDPLF. An interacts with SPRY1, SPRY2, SPRY3 and SPRY4 region spans residues 167 to 178; it reads FSNIRINMQKEI.

The protein belongs to the caveolin family. In terms of assembly, homooligomer. Interacts with GLIPR2. Interacts with NOSTRIN. Interacts with SNAP25 and STX1A. Interacts (via the N-terminus) with DPP4; the interaction is direct. Interacts with CTNNB1, CDH1 and JUP. Interacts with PACSIN2; this interaction induces membrane tubulation. Interacts with SLC7A9. Interacts with BMX and BTK. Interacts with TGFBR1. Interacts with CAVIN3 (via leucine-zipper domain) in a cholesterol-sensitive manner. Interacts with CAVIN1. Interacts with EHD2 in a cholesterol-dependent manner. Forms a ternary complex with UBXN6 and VCP; mediates CAV1 targeting to lysosomes for degradation. Interacts with ABCG1; this interaction regulates ABCG1-mediated cholesterol efflux. Interacts with NEU3; this interaction enhances NEU3 sialidase activity within caveola. Interacts (via C-terminus) with SPRY1, SPRY2 (via C-terminus), SPRY3, and SPRY4. Interacts with IGFBP5; this interaction allows trafficking of IGFBP5 from the plasma membrane to the nucleus. In terms of processing, phosphorylated at Tyr-14 by ABL1 in response to oxidative stress. Post-translationally, ubiquitinated. Undergo monoubiquitination and multi- and/or polyubiquitination. Monoubiquitination of N-terminal lysines promotes integration in a ternary complex with UBXN6 and VCP which promotes oligomeric CAV1 targeting to lysosomes for degradation. Ubiquitinated by ZNRF1; leading to degradation and modulation of the TLR4-mediated immune response.

Its subcellular location is the golgi apparatus membrane. The protein localises to the cell membrane. It localises to the membrane. The protein resides in the caveola. It is found in the membrane raft. May act as a scaffolding protein within caveolar membranes. Forms a stable heterooligomeric complex with CAV2 that targets to lipid rafts and drives caveolae formation. Mediates the recruitment of CAVIN proteins (CAVIN1/2/3/4) to the caveolae. Interacts directly with G-protein alpha subunits and can functionally regulate their activity. Involved in the costimulatory signal essential for T-cell receptor (TCR)-mediated T-cell activation. Its binding to DPP4 induces T-cell proliferation and NF-kappa-B activation in a T-cell receptor/CD3-dependent manner. Recruits CTNNB1 to caveolar membranes and may regulate CTNNB1-mediated signaling through the Wnt pathway. Negatively regulates TGFB1-mediated activation of SMAD2/3 by mediating the internalization of TGFBR1 from membrane rafts leading to its subsequent degradation. Binds 20(S)-hydroxycholesterol (20(S)-OHC). The chain is Caveolin-1 (CAV1) from Dasypus novemcinctus (Nine-banded armadillo).